The sequence spans 178 residues: Outer envelope pore protein 16-2, chloroplastic (178 aa).

The segment at 1–102 (MEKSGGRIVM…DALVKNTGKE (102 aa)) is contains beta strands. A helical transmembrane segment spans residues 103 to 119 (SLQWGLAAGLYSGITYG).

It belongs to the Tim17/Tim22/Tim23 family. Plastid outer envelope porin OEP16 (TC 1.B.30) subfamily. In terms of assembly, homodimer and oligomers in membrane. In terms of tissue distribution, detected in pollen and seeds. Present in leaves and cotyledons.

It localises to the plastid. The protein localises to the chloroplast outer membrane. Functionally, voltage-dependent high-conductance channel with a slight cation-selectivity; selective for amino acids but excludes triosephosphates or uncharged sugars. Non-essential amino acid-selective channel protein and translocation pore for NADPH:protochlorophyllide oxidoreductase A (PORA) and possibly PORB. This Arabidopsis thaliana (Mouse-ear cress) protein is Outer envelope pore protein 16-2, chloroplastic (OEP162).